The chain runs to 675 residues: Methionine--tRNA ligase (675 aa).

Positions 15-25 match the 'HIGH' region motif; that stretch reads PYANGSIHLGH. Positions 146, 149, 159, and 162 each coordinate Zn(2+). The short motif at 332 to 336 is the 'KMSKS' region element; it reads KMSKS. Lys335 is an ATP binding site. The tRNA-binding domain maps to 573–675; the sequence is DFAKVDMRIA…SGAQPGMQVK (103 aa).

It belongs to the class-I aminoacyl-tRNA synthetase family. MetG type 1 subfamily. As to quaternary structure, homodimer. The cofactor is Zn(2+).

It localises to the cytoplasm. It catalyses the reaction tRNA(Met) + L-methionine + ATP = L-methionyl-tRNA(Met) + AMP + diphosphate. Functionally, is required not only for elongation of protein synthesis but also for the initiation of all mRNA translation through initiator tRNA(fMet) aminoacylation. The polypeptide is Methionine--tRNA ligase (Yersinia pseudotuberculosis serotype IB (strain PB1/+)).